A 381-amino-acid chain; its full sequence is Metallophosphoesterase 1 (381 aa).

Residues 15–35 traverse the membrane as a helical segment; that stretch reads LIFAFVSVFVFCEYVIYYLVI. Residues aspartate 59, aspartate 101, asparagine 139, histidine 234, histidine 288, and histidine 290 each contribute to the a divalent metal cation site. Residues 341-361 form a helical membrane-spanning segment; the sequence is TVLVVYCSSCLIIALITLIHL. The Di-lysine motif motif lies at 377–381; it reads KHKTL.

Belongs to the metallophosphoesterase superfamily. MPPE1 family. It depends on Mn(2+) as a cofactor.

The protein resides in the endoplasmic reticulum-Golgi intermediate compartment membrane. Functionally, metallophosphoesterase that catalyzes the removal of a side-chain ethanolamine-phosphate (EtNP) from the second mannose of the GPI-anchor protein intermediate. Participates in the glycan remodeling steps of GPI-anchor maturation to allow an efficient transport of GPI-anchor proteins from the endoplasmic reticulum to the Golgi. This is Metallophosphoesterase 1 from Danio rerio (Zebrafish).